Here is a 690-residue protein sequence, read N- to C-terminus: Methionine--tRNA ligase (690 aa).

The 'HIGH' region motif lies at 20 to 30 (PYANGSIHLGH). Positions 151, 154, 164, and 167 each coordinate Zn(2+). Residues 337–341 (KMSKS) carry the 'KMSKS' region motif. K340 contributes to the ATP binding site. The 102-residue stretch at 589 to 690 (DFAKVDLRIA…EGAQPGMRVM (102 aa)) folds into the tRNA-binding domain.

The protein belongs to the class-I aminoacyl-tRNA synthetase family. MetG type 1 subfamily. As to quaternary structure, homodimer. It depends on Zn(2+) as a cofactor.

It localises to the cytoplasm. It carries out the reaction tRNA(Met) + L-methionine + ATP = L-methionyl-tRNA(Met) + AMP + diphosphate. Its function is as follows. Is required not only for elongation of protein synthesis but also for the initiation of all mRNA translation through initiator tRNA(fMet) aminoacylation. The sequence is that of Methionine--tRNA ligase from Vibrio vulnificus (strain CMCP6).